A 252-amino-acid polypeptide reads, in one-letter code: Diphthine synthase (252 aa).

S-adenosyl-L-methionine contacts are provided by residues L9, D85, V88, 113 to 114 (SI), L165, A202, and H227.

Belongs to the diphthine synthase family. Homodimer.

It catalyses the reaction 2-[(3S)-amino-3-carboxypropyl]-L-histidyl-[translation elongation factor 2] + 3 S-adenosyl-L-methionine = diphthine-[translation elongation factor 2] + 3 S-adenosyl-L-homocysteine + 3 H(+). It functions in the pathway protein modification; peptidyl-diphthamide biosynthesis. Its function is as follows. S-adenosyl-L-methionine-dependent methyltransferase that catalyzes the trimethylation of the amino group of the modified target histidine residue in translation elongation factor 2 (EF-2), to form an intermediate called diphthine. The three successive methylation reactions represent the second step of diphthamide biosynthesis. The protein is Diphthine synthase of Methanospirillum hungatei JF-1 (strain ATCC 27890 / DSM 864 / NBRC 100397 / JF-1).